A 122-amino-acid chain; its full sequence is LOB domain-containing protein 5 (122 aa).

An LOB domain is found at 8–109 (RPCSVCITKN…AYLRELQEKI (102 aa)).

Belongs to the LOB domain-containing protein family.

This chain is LOB domain-containing protein 5 (LBD5), found in Arabidopsis thaliana (Mouse-ear cress).